A 274-amino-acid polypeptide reads, in one-letter code: NADPH-dependent 7-cyano-7-deazaguanine reductase (274 aa).

81–83 (IES) is a substrate binding site. Position 83–84 (83–84 (SK)) interacts with NADPH. The active-site Thioimide intermediate is the Cys182. Asp189 serves as the catalytic Proton donor. 221–222 (HE) provides a ligand contact to substrate. 250–251 (RG) is a binding site for NADPH.

Belongs to the GTP cyclohydrolase I family. QueF type 2 subfamily. As to quaternary structure, homodimer.

The protein localises to the cytoplasm. It catalyses the reaction 7-aminomethyl-7-carbaguanine + 2 NADP(+) = 7-cyano-7-deazaguanine + 2 NADPH + 3 H(+). It participates in tRNA modification; tRNA-queuosine biosynthesis. Catalyzes the NADPH-dependent reduction of 7-cyano-7-deazaguanine (preQ0) to 7-aminomethyl-7-deazaguanine (preQ1). This chain is NADPH-dependent 7-cyano-7-deazaguanine reductase, found in Hahella chejuensis (strain KCTC 2396).